The chain runs to 249 residues: Type III pantothenate kinase (249 aa).

Residue 6 to 13 (DAGNSRIK) participates in ATP binding. Substrate is bound by residues Phe77 and 98-101 (GVDR). Catalysis depends on Asp100, which acts as the Proton acceptor. Asp121 contributes to the K(+) binding site. Ser124 contacts ATP. Position 177 (Thr177) interacts with substrate.

This sequence belongs to the type III pantothenate kinase family. In terms of assembly, homodimer. NH4(+) is required as a cofactor. It depends on K(+) as a cofactor.

It localises to the cytoplasm. It carries out the reaction (R)-pantothenate + ATP = (R)-4'-phosphopantothenate + ADP + H(+). Its pathway is cofactor biosynthesis; coenzyme A biosynthesis; CoA from (R)-pantothenate: step 1/5. Catalyzes the phosphorylation of pantothenate (Pan), the first step in CoA biosynthesis. The polypeptide is Type III pantothenate kinase (Teredinibacter turnerae (strain ATCC 39867 / T7901)).